A 397-amino-acid chain; its full sequence is Subtilisin-like protease 12 (397 aa).

Positions 1 to 19 are cleaved as a signal peptide; the sequence is MSIFKMMLIYFAILWVVNA. The propeptide occupies 20-116; it reads AQLLDIDPQG…VEPNKEMQVA (97 aa). Positions 35–115 constitute an Inhibitor I9 domain; that stretch reads YIVVMKDRVS…FVEPNKEMQV (81 aa). N-linked (GlcNAc...) asparagine glycosylation is found at Asn123, Asn136, and Asn150. One can recognise a Peptidase S8 domain in the interval 125-397; sequence TWGLSRISHK…NKLLYNGSGA (273 aa). Active-site charge relay system residues include Asp157 and His188. 3 N-linked (GlcNAc...) asparagine glycosylation sites follow: Asn249, Asn305, and Asn334. Ser343 acts as the Charge relay system in catalysis. Asn385 and Asn393 each carry an N-linked (GlcNAc...) asparagine glycan.

The protein belongs to the peptidase S8 family.

The protein localises to the secreted. Secreted subtilisin-like serine protease with keratinolytic activity that contributes to pathogenicity. This chain is Subtilisin-like protease 12 (SUB12), found in Trichophyton verrucosum (strain HKI 0517).